We begin with the raw amino-acid sequence, 526 residues long: Delayed-rectifier potassium channel regulatory subunit KCNS1 (526 aa).

Topologically, residues Met1–Leu217 are cytoplasmic. Residues Pro218–Ile239 traverse the membrane as a helical segment. Topologically, residues His240 to Pro270 are extracellular. Residues Val271–Leu293 form a helical membrane-spanning segment. Over Ala294–Pro304 the chain is Cytoplasmic. A helical transmembrane segment spans residues Leu305–Ala322. At Gly323–Leu337 the chain is on the extracellular side. A helical; Voltage-sensor transmembrane segment spans residues Gly338–His358. At Ser359–Tyr373 the chain is on the cytoplasmic side. The chain crosses the membrane as a helical span at residues Arg374 to Tyr395. Topologically, residues Thr396–Ile408 are extracellular. The segment at residues Pro409 to Thr420 is an intramembrane region (helical). Positions Thr421 to Asp426 match the Selectivity filter motif. The stretch at Thr421–Val428 is an intramembrane region. The Extracellular portion of the chain corresponds to Pro429–Lys435. The chain crosses the membrane as a helical span at residues Leu436–Tyr464. The Cytoplasmic segment spans residues Arg465–Tyr526. Positions Val492–Tyr526 are disordered. Positions Ser496–Gly507 are enriched in polar residues.

It belongs to the potassium channel family. S (TC 1.A.1.2) subfamily. Kv9.1/KCNS1 sub-subfamily. As to quaternary structure, heterotetramer with KCNB1. Heterotetramer with KCNB2. Does not form homomultimers.

It localises to the cell membrane. In terms of biological role, potassium channel regulatory subunit that modulate the delayed rectifier voltage-gated potassium channel activity of KCNB1 and KCNB2 by altering their kinetics, expression levels, and shifting the half-inactivation potential to more polarized values. While it does not form functional channels on its own, it can form functional heterotetrameric channels with KCNB1 and KCNB2. Each regulatory subunit has unique regulatory properties that can lead to extensive inhibition, significant changes in kinetics, and/or substantial shifts in the voltage dependencies of the inactivation process. This is Delayed-rectifier potassium channel regulatory subunit KCNS1 from Gorilla gorilla gorilla (Western lowland gorilla).